Reading from the N-terminus, the 383-residue chain is Probable purine permease 16 (383 aa).

Transmembrane regions (helical) follow at residues 30–50, 72–92, 113–133, 138–158, 166–186, 203–223, 247–267, 297–317, 322–342, and 346–363; these read ISVF…MLLL, WTQA…FFIL, VLSL…LYAL, VGWG…SAFI, WIII…PAFA, LILI…QLGF, ICVS…SGEF, VWAV…ADVV, SPVV…EFGW, and GALL…YSLH.

Belongs to the purine permeases (TC 2.A.7.14) family.

It localises to the membrane. The sequence is that of Probable purine permease 16 (PUP16) from Arabidopsis thaliana (Mouse-ear cress).